A 745-amino-acid chain; its full sequence is Junction plakoglobin (745 aa).

At M1 the chain carries N-acetylmethionine. The O-linked (GlcNAc) threonine glycan is linked to T14. A phosphoserine mark is found at S99 and S125. ARM repeat units lie at residues 132-171 (NYQDDAELATRALPELTKLLNDEDPVVVTKAAMIVNQLSK), 172-215 (KEAS…LSHH), 216-255 (REGLLAIFKSGGIPALVRMLSSPVESVLFYAITTLHNLLL), 258-297 (EGAKMAVRLADGLQKMVPLLNKNNPKFLAITTDCLQLLAY), 298-341 (GNQE…LSVC), 342-381 (PSNKPAIVEAGGMQALGKHLTSNSPRLVQNCLWTLRNLSD), 383-420 (ATKQEGLESVLKILVNQLSVDDVNVLTCATGTLSNLTC), 423-464 (SKNK…HLTS), 470-510 (EMAQ…NLAL), 512-551 (PANHAPLQEAAVIPRLVQLLVKAHQDAQRHVAAGTQQPYT), 574-613 (PMNRMEIFRLNTIPLFVQLLYSSVENIQRVAAGVLCELAQ), and 615-661 (KEAA…PDYR). Residues 132-297 (NYQDDAELAT…TTDCLQLLAY (166 aa)) are interaction with DSC1 and DSG1. S182 is modified (phosphoserine). The interval 574–661 (PMNRMEIFRL…ISEDKNPDYR (88 aa)) is interaction with DSC1. 2 positions are modified to phosphoserine: S665 and S730.

This sequence belongs to the beta-catenin family. Homodimer. Component of an E-cadherin/catenin adhesion complex composed of at least E-cadherin/CDH1 and gamma-catenin/JUP, and possibly alpha-catenin/CTNNA1; the complex is located to adherens junctions. The stable association of CTNNA1 is controversial as CTNNA1 was shown not to bind to F-actin when assembled in the complex. Interacts with MUC1. Interacts with CAV1. Interacts with PTPRJ. Interacts with DSG1. Interacts with DSC1 and DSC2. Interacts with PKP2. Interacts with PKP3 (via N-terminus); the interaction is required for PKP3 localization to desmosome cell-cell junctions. Interacts with DSG4. May be phosphorylated by FER.

It is found in the cell junction. The protein localises to the adherens junction. Its subcellular location is the desmosome. It localises to the cytoplasm. The protein resides in the cytoskeleton. It is found in the cell membrane. The protein localises to the nucleus. Its function is as follows. Common junctional plaque protein. The membrane-associated plaques are architectural elements in an important strategic position to influence the arrangement and function of both the cytoskeleton and the cells within the tissue. The presence of plakoglobin in both the desmosomes and in the intermediate junctions suggests that it plays a central role in the structure and function of submembranous plaques. Acts as a substrate for VE-PTP and is required by it to stimulate VE-cadherin function in endothelial cells. Can replace beta-catenin in E-cadherin/catenin adhesion complexes which are proposed to couple cadherins to the actin cytoskeleton. The polypeptide is Junction plakoglobin (Bos taurus (Bovine)).